The sequence spans 798 residues: Sodium/hydrogen exchanger 4 (798 aa).

The Cytoplasmic portion of the chain corresponds to 1 to 13 (MALQMFVTYSPWN). Positions 14–28 (CLLLLVALECSEASS) form an intramembrane region, name=A/M1. Over 29–69 (DLNESANSTAQYASNAWFAAASSEPEEGISVFELDYDYVQI) the chain is Cytoplasmic. Positions 70–90 (PYEVTLWILLASLAKIGFHLY) form an intramembrane region, name=B/M2. At 91 to 94 (HRLP) the chain is on the cytoplasmic side. Residues 95–115 (GLMPESCLLILVGALVGGIIF) form a helical membrane-spanning segment. Residues 116 to 127 (GTDHKSPPVMDS) are Extracellular-facing. A helical transmembrane segment spans residues 128-148 (SIYFLYLLPPIVLEGGYFMPT). The Cytoplasmic segment spans residues 149–154 (RPFFEN). A helical transmembrane segment spans residues 155–175 (IGSILWWAVLGALINALGIGL). The Extracellular portion of the chain corresponds to 176–196 (SLYLICQVKAFGLGDVNLLQN). Residues 197 to 217 (LLFGSLISAVDPVAVLAVFEE) form a helical membrane-spanning segment. Topologically, residues 218-226 (ARVNEQLYM) are cytoplasmic. A helical transmembrane segment spans residues 227–247 (MIFGEALLNDGITVVLYNMLI). The Extracellular portion of the chain corresponds to 248-270 (AFTKMHKFEDIETVDILAGCARF). The chain crosses the membrane as a helical span at residues 271–291 (IVVGLGGVLFGIVFGFISAFI). Residues 292–304 (TRFTQNISAIEPL) are Cytoplasmic-facing. A helical membrane pass occupies residues 305–325 (IVFMFSYLSYLAAETLYLSGI). Residues 326–356 (LAITACAVTMKKYVEENVSQTSYTTIKYFMK) lie on the Extracellular side of the membrane. N-linked (GlcNAc...) asparagine glycosylation is present at Asn342. A helical membrane pass occupies residues 357–373 (MLSSVSETLIFIFMGVS). Over 374 to 384 (TVGKNHEWNWA) the chain is Cytoplasmic. A helical membrane pass occupies residues 385 to 405 (FICFTLAFCQIWRAISVFALF). The Extracellular portion of the chain corresponds to 406–420 (YISNQFRTFPFSIKD). Residues 421 to 441 (QCIIFYSGVRGAGSFSLAFLL) constitute an intramembrane region (name=L). The Extracellular portion of the chain corresponds to 442–450 (PLSLFPRKK). A helical membrane pass occupies residues 451 to 471 (MFVTATLVVIYFTVFIQGITV). At 472-798 (GPLVRYLDVK…RSHSPLLQKK (327 aa)) the chain is on the cytoplasmic side. Disordered stretches follow at residues 662–690 (PYGN…GSPS) and 776–798 (RWTA…LQKK). Positions 784 to 798 (GRDHHRSHSPLLQKK) are enriched in basic residues.

This sequence belongs to the monovalent cation:proton antiporter 1 (CPA1) transporter (TC 2.A.36) family. Homodimer; each protomer has one site for sodium and one site for proton binding. Interacts with CHP1 and CHP2. May be phosphorylated.

Its subcellular location is the basolateral cell membrane. It localises to the apical cell membrane. The protein localises to the zymogen granule membrane. It catalyses the reaction Na(+)(in) + H(+)(out) = Na(+)(out) + H(+)(in). The catalysed reaction is Na(+)(out) + NH4(+)(in) = Na(+)(in) + NH4(+)(out). Its function is as follows. Electroneutral antiporter that exchanges sodium for protons or ammonium ions at the basolateral membrane of epithelia to regulate cell volume and intracellular pH upon hypertonic conditions. As part of transcellular ammonia transport in renal tubules, mediates basolateral ammonium extrusion in the medullary thick ascending limb, regulating the corticopapillary ammonium gradient and overall renal acid excretion. Mediates sodium:proton exchange in gastric parietal cells secondary to cAMP-dependent acid secretion and hyperosmolarity. Possibly coupled to chloride:bicarbonate antiporter, enables loading of parietal cells with sodium and chloride ions to maintain cell volume and normal gastric acid secretion. Functions as a sodium sensor in neurons of organum vasculosum of the lamina terminalis where it regulates water intake in response to increased sodium concentration in body fluids. The polypeptide is Sodium/hydrogen exchanger 4 (SLC9A4) (Homo sapiens (Human)).